We begin with the raw amino-acid sequence, 364 residues long: Aminomethyltransferase (364 aa).

The protein belongs to the GcvT family. The glycine cleavage system is composed of four proteins: P, T, L and H.

It carries out the reaction N(6)-[(R)-S(8)-aminomethyldihydrolipoyl]-L-lysyl-[protein] + (6S)-5,6,7,8-tetrahydrofolate = N(6)-[(R)-dihydrolipoyl]-L-lysyl-[protein] + (6R)-5,10-methylene-5,6,7,8-tetrahydrofolate + NH4(+). Functionally, the glycine cleavage system catalyzes the degradation of glycine. The protein is Aminomethyltransferase of Enterobacter sp. (strain 638).